A 2342-amino-acid chain; its full sequence is Outer kinetochore KNL1 complex subunit KNL1 (2342 aa).

The segment at 1 to 56 (MDGVSSEANEENDNIERPVRRRHSSILKPPRSPLQDLRGGNERVQESNALRNKKNS) is disordered. A may mediate oligomerization region spans residues 1 to 250 (MDGVSSEANE…FNDFIKRLKT (250 aa)). The segment at 1–728 (MDGVSSEANE…QSLFSTTKPL (728 aa)) is interaction with BUB1 and BUB1B. 2 interaction with microtubules regions span residues 17 to 34 (RPVRRRHSSILKPPRSPL) and 53 to 80 (KKNSRRVSFADTIKVFQTESHMKIVRKS). An interaction with PP1CA; contains the protein phosphatase 1 (PP1) interaction motifs SILK, RVXF and phi-phi region spans residues 23-80 (HSSILKPPRSPLQDLRGGNERVQESNALRNKKNSRRVSFADTIKVFQTESHMKIVRKS). A Phosphoserine; by AURKB modification is found at serine 24. Phosphoserine is present on serine 32. Residue serine 60 is modified to Phosphoserine; by AURKB. The segment at 174–190 (ENQMDLTSSHTVMITKG) is interaction with BUB1. Residues 210-226 (ANLKLHTEDSRMKKEVN) are interaction with BUB1B. Threonine 539 is subject to Phosphothreonine. Residues serine 578 and serine 584 each carry the phosphoserine modification. A Phosphothreonine modification is found at threonine 586. The segment at 620 to 646 (APESTSESHSQSKSSSDECEEITKSRN) is disordered. A compositionally biased stretch (low complexity) spans 622 to 633 (ESTSESHSQSKS). Serine 767 carries the phosphoserine modification. Positions 855–1201 (EDESVQKPKF…VTDSHTVFID (347 aa)) are 2 X 104 AA approximate repeats. The stretch at 885 to 989 (DKTIVFSEDD…MTESHTVFID (105 aa)) is repeat 1. The residue at position 901 (threonine 901) is a Phosphothreonine. 4 positions are modified to phosphoserine: serine 956, serine 1039, serine 1076, and serine 1088. Repeat 2 spans residues 1099–1201 (DKTIVFSENH…VTDSHTVFID (103 aa)). Serine 1448 is modified (phosphoserine). Positions 1639–1662 (SNAKDSRDEENKKSHNGAETTSLP) are disordered. Residues 1642-1651 (KDSRDEENKK) show a composition bias toward basic and acidic residues. A phosphoserine mark is found at serine 1675 and serine 1773. The Nuclear localization signal signature appears at 1789–1803 (TWVQEEEDIHKEKKI). Position 1831 is a phosphoserine (serine 1831). Residues serine 1831 and serine 1834 each carry the phosphoserine; by TTK modification. Phosphoserine occurs at positions 1845 and 1860. A required for interaction with ZWINT region spans residues 1981–2108 (KMRHCSDKEL…LLELEVQKEQ (128 aa)). Residues 2024 to 2133 (VQSAQNEREK…EELLDQLSLS (110 aa)) adopt a coiled-coil conformation. An interaction with NSL1, DSN1 and required for assembly into the outer kinetochore region spans residues 2091–2311 (EEEELQRNLL…GNTSQDDIAT (221 aa)).

In terms of assembly, component of the KNL1 complex composed of KNL1 and ZWINT. Part of the ten-subunit outer kinetochore KMN network that includes the KNL1, MIS12 and NDC80 complexes; a bioriented kinetochore contains approximately 150 copies of the network. Interacts (via C-terminus) with the MIS12 complex subunits NSL1 (via C-terminus), PMF1 and DSN1; the interaction is direct. Interacts (via N-terminal region) with BUB1B (via BUB1 N-terminal domain); the interaction is direct and is required for cell cycle arrest upon activation of the mitotic spindle assembly checkpoint. Interacts (via N-terminal region) with BUB1 (via BUB1 N-terminal domain); the interaction is direct. Interacts with the protein phosphatase PP1 subunit PPP1CA; the interaction is direct and mutually exclusive with binding to microtubules. Interacts with the protein phosphatase PP1 subunit PPP1CC; the interaction is direct and mutually exclusive with binding to microtubules. Phosphorylation by AURKB negatively regulates its interaction with protein phosphatase 1 (PP1) subunit PPP1CA and with microtubules. In terms of tissue distribution, highly expressed in testis, where it is localized in germ cells, in particular in spermatocytes and in the pre-acrosome of round spermatids. Detected in the acrosome of ejaculated spermatozoa. Detected in adult thymus, bone marrow, colon, small intestine, appendix and placenta, and in fetal liver and thymus.

The protein resides in the nucleus. It localises to the chromosome. The protein localises to the centromere. It is found in the kinetochore. Its subcellular location is the cytoplasm. Functionally, acts as a component of the outer kinetochore KNL1 complex that serves as a docking point for spindle assembly checkpoint components and mediates microtubule-kinetochore interactions. Kinetochores, consisting of a centromere-associated inner segment and a microtubule-contacting outer segment, play a crucial role in chromosome segregation by mediating the physical connection between centromeric DNA and spindle microtubules. The outer kinetochore is made up of the ten-subunit KMN network, comprising the MIS12, NDC80 and KNL1 complexes, and auxiliary microtubule-associated components; together they connect the outer kinetochore with the inner kinetochore, bind microtubules, and mediate interactions with mitotic checkpoint proteins that delay anaphase until chromosomes are bioriented on the spindle. Required for kinetochore binding by a distinct subset of kMAPs (kinetochore-bound microtubule-associated proteins) and motors. Acts in coordination with CENPK to recruit the NDC80 complex to the outer kinetochore. Can bind either to microtubules or to the protein phosphatase 1 (PP1) catalytic subunits PPP1CA and PPP1CC (via overlapping binding sites), it has higher affinity for PP1. Recruits MAD2L1 to the kinetochore and also directly links BUB1 and BUB1B to the kinetochore. In addition to orienting mitotic chromosomes, it is also essential for alignment of homologous chromosomes during meiotic metaphase I. In meiosis I, required to activate the spindle assembly checkpoint at unattached kinetochores to correct erroneous kinetochore-microtubule attachments. The protein is Outer kinetochore KNL1 complex subunit KNL1 of Homo sapiens (Human).